The sequence spans 133 residues: Small ribosomal subunit protein uS19 (133 aa).

Belongs to the universal ribosomal protein uS19 family.

Its function is as follows. Protein S19 forms a complex with S13 that binds strongly to the 16S ribosomal RNA. In Thermococcus onnurineus (strain NA1), this protein is Small ribosomal subunit protein uS19.